An 878-amino-acid chain; its full sequence is Longitudinals lacking protein, isoforms N/O/W/X/Y (878 aa).

In terms of domain architecture, BTB spans 32–97; the sequence is VDCTLAAEGK…MYRGEVNISQ (66 aa). Disordered regions lie at residues 115–200, 228–340, and 542–583; these read LSDN…SSVL, SSGP…ASAS, and QIVK…QTHA. 5 stretches are compositionally biased toward low complexity: residues 162–175, 228–251, 263–293, 329–340, and 546–569; these read SGDV…SSSP, SSGP…LTST, TSST…QTTS, NSATGPNPASAS, and QQHQ…QQQQ. A C2H2-type 1; degenerate zinc finger spans residues 709–731; the sequence is YACNVCGKTYKIKGSLKRHKNYE. The segment at 794–816 adopts a C2H2-type 2 zinc-finger fold; that stretch reads FQCDFCLKWFKRRSHLNRHKKLH. The segment at 826–863 is disordered; that stretch reads SKQKPKTTSGQNLSHDANTDDEVATTNPAATEDESNYP. Residues 831–841 are compositionally biased toward polar residues; that stretch reads KTTSGQNLSHD.

As to expression, by stage 11, isoform W, isoform X and isoform Y are expressed throughout the mesoderm, whereas isoform O is expressed in both mesoderm and ectoderm. From stage 15, expression of isoform O expands to all tissues, whereas expression of isoform W, isoform X and isoform Y becomes restricted during later stages; starting from stage 14 to 16, isoform W, isoform X and isoform Y are expressed in muscle. From stages 14 and 15, isoform W and isoform Y are expressed in the gut. For some isoforms, expression is also seen in specific types of cells in the embryo; isoform O is expressed in the ventral furrow at stage 5 and in the dorsal epidermis from stage 7. Isoform Y shows prominent expression in the gonad starting at stage 15.

The protein resides in the nucleus. In terms of biological role, putative transcription factor required for axon growth and guidance in the central and peripheral nervous systems. Repels CNS axons away from the midline by promoting the expression of the midline repellent sli and its receptor robo. This Drosophila melanogaster (Fruit fly) protein is Longitudinals lacking protein, isoforms N/O/W/X/Y.